The sequence spans 321 residues: 2-oxoglutarate-dependent dioxygenase frbH (321 aa).

Residues 77 to 97 (SRNSDTHGYEPVATSTGAQDD) are disordered. Residues 169 to 273 (ESLSTLSMFR…RFSIAYFLRA (105 aa)) enclose the Fe2OG dioxygenase domain. 3 residues coordinate Fe cation: His194, Asp196, and His251. Position 264 (Arg264) interacts with 2-oxoglutarate.

Belongs to the iron/ascorbate-dependent oxidoreductase family.

It participates in antifungal biosynthesis. Functionally, 2-oxoglutarate-dependent dioxygenase; part of the gene cluster that mediates the biosynthesis of the antifungal antibiotic FR901469, an inhibitor of beta-1,3-glucansynthase, exerting antifungal activity against the pathogenes Candida albicans and Aspergillus fumigatus. FR901469 is a cyclic depsipeptide containing 12 amino acid residues and a fatty acid chain. The NRPS frbI contains 12 modules responsible for the formation of the depsipeptide backbone which is denoted as Acyl-Thr-Ala-Tyr-Val-4OHPro-Thr-Thr-3OHPro-threo3OHGln-Gly-Thr-Orn-OH (C71H116N14O23). The PKS frbB is probably involved in the production of the hydrocarbon chain, and the acyl-CoA ligase frbC might be involved in the transport of the chain to the peptide ptoduct of frbI. Because FR901469 contains 3 hydroxylated amino acid residues, the 3 oxygenases frbA, frbH, and frbJ might be participating in amino acid hydroxylation. As no thioesterase domains were detected in frbI or frbB, the thioesterases frbD and frbE may instead release and cyclize the products of the NRPS and PKS, respectively. The chain is 2-oxoglutarate-dependent dioxygenase frbH from Dothideomycetidae sp. (strain 11243) (Fungal sp. (strain No.11243)).